An 89-amino-acid polypeptide reads, in one-letter code: Long neurotoxin homolog TA-bm16 (89 aa).

A signal peptide spans 1–21 (MKTLLLTLVVVTIVCLDLGYT). 5 cysteine pairs are disulfide-bonded: Cys-24–Cys-45, Cys-27–Cys-32, Cys-38–Cys-66, Cys-70–Cys-81, and Cys-82–Cys-87.

Belongs to the three-finger toxin family. Ancestral subfamily. Orphan group V sub-subfamily. Expressed by the venom gland.

The protein localises to the secreted. Functionally, exhibits M2 muscarinic acetylcholine receptor (CHRM2)-blocking activity, but has a weak binding activity toward nicotinic AChR. Moreover, it inhibits collagen-induced platelet aggregation. The polypeptide is Long neurotoxin homolog TA-bm16 (Bungarus multicinctus (Many-banded krait)).